The following is a 183-amino-acid chain: Integrase-like protein y4lS (183 aa).

The Resolvase/invertase-type recombinase catalytic domain maps to 2 to 136; sequence ARIGYARTFT…EGIAAARKRG (135 aa).

Belongs to the site-specific recombinase resolvase family.

In Sinorhizobium fredii (strain NBRC 101917 / NGR234), this protein is Integrase-like protein y4lS.